The following is a 407-amino-acid chain: O-antigen polymerase (407 aa).

The next 11 helical transmembrane spans lie at 2–22, 31–51, 63–83, 101–121, 141–161, 168–185, 190–204, 211–231, 319–339, 356–376, and 382–402; these read LIISYIALCLLFIVYLYTLSV, VMVPYLIITVPTLYVFEGIFV, YLFFYTCYITYIASFVISYLY, YVFTSLLFTFLAFIIYLPVLM, YGIYFYPSLMFSLVASICAFF, LFCISIVLFNCILIFLHG, IFSIFIAFILYLSYI, FMFLVKSFAVIAVIVTAFFAY, ADFGLFTPVWLVISGVFKGVL, FIMFLFCIGISVIPVSMGWLF, and IAFMVYIASSFVFSEHIRFVL.

It localises to the cell inner membrane. The catalysed reaction is n lipid-linked O-antigen repeat units = a lipid-linked O antigen + (n-1) polyisoprenyl diphosphate.. The protein operates within bacterial outer membrane biogenesis; LPS O-antigen biosynthesis. Functionally, polymerase involved in the biosynthesis of the lipopolysaccharide (LPS). Catalyzes the polymerization of the O-antigen repeat units on the periplasmic face of the inner membrane, leading to the formation of the lipid-linked O-antigen molecule. The chain is O-antigen polymerase (rfc) from Salmonella typhi.